Reading from the N-terminus, the 649-residue chain is Echinoderm microtubule-associated protein-like 2 (649 aa).

A tandem atypical propeller in EMLs region spans residues 10-649; that stretch reads KEVIFSVEDG…DTSVLQWRVV (640 aa). Coiled-coil stretches lie at residues 13–58 and 73–114; these read IFSV…LKLE and YLLP…LAIH. 12 WD repeats span residues 56–93, 97–144, 151–192, 195–234, 241–280, 285–323, 369–406, 410–447, 452–489, 495–535, 564–602, and 609–648; these read KLEWVYGYRGRDCRANLYLLPTGEIVYFVASVAVLYSV, RQRH…IWDS, HVLG…VWDW, ETKVVDVKCSNEAVLVATFHPTDPTVLITCGKSHIYFWTL, KRQGLFEKHEKPKYVLCVTFLEGGDVVTGDSGGNLYVWGK, ITQAVLGAHDGGVFGLCALRDGTLVSGGGRDRRVVLWGS, FSLLVQGHVEELWGLATHPSRAQFVTCGQDKLVHLWSS, QPLWSRIIEDPARSAGFHPSGSVLAVGTVTGRWLLLDT, LVAIHTDGNEQISVVSFSPDGAYLAVGSHDNLVYVYTV, KVSR…YWDP, FGIWSEGADGTDINAVARSHDGKLLASADDFGKVHLFSY, and ALSHKYGGHSSHVTNVAFLWDDSMALTTGGKDTSVLQWRV.

Belongs to the WD repeat EMAP family. In terms of assembly, homotrimer; self-association is mediated by the N-terminal coiled coil. As to quaternary structure, interacts with GRID2 and may also interact with GRID1. Interacts with EML3. Binds unpolymerized tubulins via its WD repeat region. As to expression, ubiquitous.

The protein localises to the cytoplasm. Its subcellular location is the cytoskeleton. It localises to the spindle. In terms of biological role, tubulin binding protein that inhibits microtubule nucleation and growth, resulting in shorter microtubules. The sequence is that of Echinoderm microtubule-associated protein-like 2 (EML2) from Homo sapiens (Human).